Reading from the N-terminus, the 343-residue chain is Flavonoid 4'-O-methyltransferase 4 (343 aa).

Residue D211 coordinates S-adenosyl-L-methionine. The Proton acceptor role is filled by H249.

Belongs to the class I-like SAM-binding methyltransferase superfamily. Cation-independent O-methyltransferase family. As to quaternary structure, homodimer.

It catalyses the reaction apigenin + S-adenosyl-L-methionine = acacetin + S-adenosyl-L-homocysteine + H(+). It carries out the reaction kaempferol + S-adenosyl-L-methionine = kaempferide + S-adenosyl-L-homocysteine + H(+). The catalysed reaction is isorhamnetin + S-adenosyl-L-methionine = 3',4'-O-dimethylquercetin + S-adenosyl-L-homocysteine + 2 H(+). The enzyme catalyses scutellarein + S-adenosyl-L-methionine = scutellarein 4'-methyl ether + S-adenosyl-L-homocysteine + H(+). It catalyses the reaction (2S)-naringenin + S-adenosyl-L-methionine = (2S)-naringenin 4'-methyl ether + S-adenosyl-L-homocysteine + H(+). It carries out the reaction 4',7,8-trihydroxyflavone + S-adenosyl-L-methionine = 7,8-dihydroxy-4'-methoxyflavone + S-adenosyl-L-homocysteine + H(+). The catalysed reaction is taxifolin + S-adenosyl-L-methionine = taxifolin 4'-methyl ether + S-adenosyl-L-homocysteine + H(+). It functions in the pathway flavonoid metabolism. Functionally, flavonoid 4'-O-methyltransferase involved in the biosynthesis of polymethoxylated flavonoids natural products such as pebrellin, aroma compounds which contribute to the flavor of peppermint, and exhibit pharmacological activities such as anti-allergic, anti-oxidant, antibacterial, anti-proliferative, and anti-inflammatory effects. Catalyzes S-adenosylmethionine-dependent regioselective 4'-O-methylation of flavonoids; active on various hydroxylated flavonoid substrates, including isorhamnetin, kaempferol, apigenin (API), scutellarein (6-hydroxy-apigenin, 6-OH-API, SCU), taxifolin, 7,8,4'-trihydroxy-flavone and naringenin (NAR), and, with a lower efficiency, quercetin, rhamnetin, luteolin (LUT) and 7,8,3',4'-tetrahydroxy-flavone. In Mentha piperita (Peppermint), this protein is Flavonoid 4'-O-methyltransferase 4.